The sequence spans 274 residues: Copper chaperone for superoxide dismutase (274 aa).

Residues methionine 11–valine 74 form the HMA domain. Residues cysteine 22 and cysteine 25 each contribute to the Cu cation site. Lysine 76 participates in a covalent cross-link: Glycyl lysine isopeptide (Lys-Gly) (interchain with G-Cter in ubiquitin). The segment at alanine 88–alanine 234 is superoxide dismutase-like. Cysteine 141 and cysteine 227 are oxidised to a cystine. Histidine 147, histidine 155, histidine 164, and aspartate 167 together coordinate Zn(2+). Residues lysine 189, lysine 216, and lysine 241 each participate in a glycyl lysine isopeptide (Lys-Gly) (interchain with G-Cter in ubiquitin) cross-link. Cu cation contacts are provided by cysteine 244 and cysteine 246. The residue at position 267 (serine 267) is a Phosphoserine.

This sequence in the C-terminal section; belongs to the Cu-Zn superoxide dismutase family. In terms of assembly, homodimer, and heterodimer with SOD1. Interacts with COMMD1. Interacts with XIAP/BIRC4. Interacts with SLC31A1(via C-terminal domain); this interaction is Cu(1+)-mediated. The heterodimer CCS:SOD1 interacts with SLC31A1; this heterotrimer is Cu(1+)-mediated and its maintenance is regulated through SOD1 activation. It depends on Cu(2+) as a cofactor. Zn(2+) serves as cofactor. Post-translationally, ubiquitinion by XIAP/BIRC4 leads to enhancement of its chaperone activity toward its physiologic target, SOD1, rather than proteasomal degradation. XIAP/BIRC4 preferentially ubiquitinates at Lys-241.

It is found in the cytoplasm. Functionally, delivers copper to copper zinc superoxide dismutase (SOD1). This is Copper chaperone for superoxide dismutase from Rattus norvegicus (Rat).